A 197-amino-acid polypeptide reads, in one-letter code: Phospholipid hydroperoxide glutathione peroxidase (197 aa).

The residue at position 40 (serine 40) is a Phosphoserine. Selenocysteine 73 is an active-site residue. Selenocysteine 73 is a non-standard amino acid (selenocysteine).

The protein belongs to the glutathione peroxidase family. As to quaternary structure, monomer. Has a tendency to form higher mass oligomers. Interacts with FUNDC1; this interaction promotes GPX4 recruitment into mitochondria through TOM/TIM complex where it is degraded by mitophagy. Expressed very intensively in the testis and weakly in lung, heart, and cerebellum.

It localises to the mitochondrion. Its subcellular location is the cytoplasm. It catalyses the reaction a hydroperoxy polyunsaturated fatty acid + 2 glutathione = a hydroxy polyunsaturated fatty acid + glutathione disulfide + H2O. The catalysed reaction is 2 glutathione + H2O2 = glutathione disulfide + 2 H2O. The enzyme catalyses tert-butyl hydroperoxide + 2 glutathione = tert-butanol + glutathione disulfide + H2O. It carries out the reaction cumene hydroperoxide + 2 glutathione = 2-phenylpropan-2-ol + glutathione disulfide + H2O. It catalyses the reaction (9S)-hydroperoxy-(10E,12Z)-octadecadienoate + 2 glutathione = (9S)-hydroxy-(10E,12Z)-octadecadienoate + glutathione disulfide + H2O. The catalysed reaction is (13S)-hydroperoxy-(9Z,11E)-octadecadienoate + 2 glutathione = (13S)-hydroxy-(9Z,11E)-octadecadienoate + glutathione disulfide + H2O. The enzyme catalyses (5S)-hydroperoxy-(6E,8Z,11Z,14Z)-eicosatetraenoate + 2 glutathione = (5S)-hydroxy-(6E,8Z,11Z,14Z)-eicosatetraenoate + glutathione disulfide + H2O. It carries out the reaction (12R)-hydroperoxy-(5Z,8Z,10E,14Z)-eicosatetraenoate + 2 glutathione = (12R)-hydroxy-(5Z,8Z,10E,14Z)-eicosatetraenoate + glutathione disulfide + H2O. It catalyses the reaction (12S)-hydroperoxy-(5Z,8Z,10E,14Z)-eicosatetraenoate + 2 glutathione = (12S)-hydroxy-(5Z,8Z,10E,14Z)-eicosatetraenoate + glutathione disulfide + H2O. The catalysed reaction is (15S)-hydroperoxy-(5Z,8Z,11Z,13E)-eicosatetraenoate + 2 glutathione = (15S)-hydroxy-(5Z,8Z,11Z,13E)-eicosatetraenoate + glutathione disulfide + H2O. The enzyme catalyses (5S)-hydroperoxy-(6E,8Z,11Z,14Z,17Z)-eicosapentaenoate + 2 glutathione = (5S)-hydroxy-(6E,8Z,11Z,14Z,17Z)-eicosapentaenoate + glutathione disulfide + H2O. It carries out the reaction (12S)-hydroperoxy-(5Z,8Z,10E,14Z,17Z)-eicosapentaenoate + 2 glutathione = (12S)-hydroxy-(5Z,8Z,10E,14Z,17Z)-eicosapentaenoate + glutathione disulfide + H2O. It catalyses the reaction (15S)-hydroperoxy-(5Z,8Z,11Z,13E,17Z)-eicosapentaenoate + 2 glutathione = (15S)-hydroxy-(5Z,8Z,11Z,13E,17Z)-eicosapentaenoate + glutathione disulfide + H2O. The catalysed reaction is (15S)-hydroperoxy-(11Z,13E)-eicosadienoate + 2 glutathione = (15S)-hydroxy-(11Z,13E)-eicosadienoate + glutathione disulfide + H2O. The enzyme catalyses (17S)-hydroperoxy-(4Z,7Z,10Z,13Z,15E,19Z)-docosahexaenoate + 2 glutathione = (17S)-hydroxy-(4Z,7Z,10Z,13Z,15E,19Z)-docosahexaenoate + glutathione disulfide + H2O. It carries out the reaction a hydroperoxy-1,2-diacyl-glycero-3-phosphocholine + 2 glutathione = a hydroxy-1,2-diacyl-glycero-3-phosphocholine + glutathione disulfide + H2O. Essential antioxidant peroxidase that directly reduces phospholipid hydroperoxide even if they are incorporated in membranes and lipoproteins. Can also reduce fatty acid hydroperoxide, cholesterol hydroperoxide and thymine hydroperoxide. Plays a key role in protecting cells from oxidative damage by preventing membrane lipid peroxidation. Required to prevent cells from ferroptosis, a non-apoptotic cell death resulting from an iron-dependent accumulation of lipid reactive oxygen species. The presence of selenocysteine (Sec) versus Cys at the active site is essential for life: it provides resistance to overoxidation and prevents cells against ferroptosis. The presence of Sec at the active site is also essential for the survival of a specific type of parvalbumin-positive interneurons, thereby preventing against fatal epileptic seizures. May be required to protect cells from the toxicity of ingested lipid hydroperoxides. Required for normal sperm development and male fertility. Essential for maturation and survival of photoreceptor cells. Plays a role in a primary T-cell response to viral and parasitic infection by protecting T-cells from ferroptosis and by supporting T-cell expansion. Plays a role of glutathione peroxidase in platelets in the arachidonic acid metabolism. Reduces hydroperoxy ester lipids formed by a 15-lipoxygenase that may play a role as down-regulator of the cellular 15-lipoxygenase pathway. Can also reduce small soluble hydroperoxides such as H2O2, cumene hydroperoxide and tert-butyl hydroperoxide. The chain is Phospholipid hydroperoxide glutathione peroxidase from Macaca fuscata fuscata (Japanese macaque).